Reading from the N-terminus, the 218-residue chain is Mediator of RNA polymerase II transcription subunit 20 (218 aa).

The protein belongs to the Mediator complex subunit 20 family. As to quaternary structure, component of the Mediator complex.

The protein localises to the nucleus. Functionally, component of the Mediator complex, a coactivator involved in the regulated transcription of nearly all RNA polymerase II-dependent genes. Mediator functions as a bridge to convey information from gene-specific regulatory proteins to the basal RNA polymerase II transcription machinery. Mediator is recruited to promoters by direct interactions with regulatory proteins and serves as a scaffold for the assembly of a functional preinitiation complex with RNA polymerase II and the general transcription factors. In Anopheles gambiae (African malaria mosquito), this protein is Mediator of RNA polymerase II transcription subunit 20 (MED20).